A 427-amino-acid polypeptide reads, in one-letter code: 3-phosphoshikimate 1-carboxyvinyltransferase (427 aa).

K22, S23, and R27 together coordinate 3-phosphoshikimate. Phosphoenolpyruvate is bound at residue K22. Residues G96 and R124 each coordinate phosphoenolpyruvate. The 3-phosphoshikimate site is built by S169, S170, Q171, S197, D313, N336, and K340. Q171 serves as a coordination point for phosphoenolpyruvate. D313 serves as the catalytic Proton acceptor. Positions 344, 386, and 411 each coordinate phosphoenolpyruvate.

This sequence belongs to the EPSP synthase family. Monomer.

Its subcellular location is the cytoplasm. The catalysed reaction is 3-phosphoshikimate + phosphoenolpyruvate = 5-O-(1-carboxyvinyl)-3-phosphoshikimate + phosphate. It participates in metabolic intermediate biosynthesis; chorismate biosynthesis; chorismate from D-erythrose 4-phosphate and phosphoenolpyruvate: step 6/7. In terms of biological role, catalyzes the transfer of the enolpyruvyl moiety of phosphoenolpyruvate (PEP) to the 5-hydroxyl of shikimate-3-phosphate (S3P) to produce enolpyruvyl shikimate-3-phosphate and inorganic phosphate. This is 3-phosphoshikimate 1-carboxyvinyltransferase from Salmonella arizonae (strain ATCC BAA-731 / CDC346-86 / RSK2980).